Reading from the N-terminus, the 299-residue chain is Peroxisomal biogenesis factor 19 (299 aa).

The disordered stretch occupies residues 1–63 (MAAAEEGCDA…SPGDTAKDAL (63 aa)). An N-acetylalanine modification is found at Ala-2. The tract at residues 2–56 (AAAEEGCDAGVEADRELEELLESALDDFDKAKPSPAPPPTTSAPDASGPQKKSPG) is docking to the peroxisome membrane and binding to PEX3. Residues 2–91 (AAAEEGCDAG…QATAEFEKAM (90 aa)) form a necessary for PEX19 function on peroxisome biogenesis region. Residues 16-27 (RELEELLESALD) show a composition bias toward acidic residues. A phosphoserine mark is found at Ser-35, Ser-54, and Ser-66. At Thr-236 the chain carries Phosphothreonine. Residue Cys-296 is modified to Cysteine methyl ester. A lipid anchor (S-farnesyl cysteine) is attached at Cys-296. Residues 297-299 (LIM) constitute a propeptide, removed in mature form.

The protein belongs to the peroxin-19 family. Interacts with a broad range of peroxisomal membrane proteins, including PEX3, PEX10, PEX11A, PEX11B, PEX12, PEX13, PEX14 and PEX16, PXMP2/PMP22, PXMP4/PMP24, SLC25A17/PMP34, ABCD1/ALDP, ABCD2/ALDRP, and ABCD3/PMP70. Also interacts with the tumor suppressor CDKN2A/p19ARF. As to expression, ubiquitous.

The protein localises to the cytoplasm. The protein resides in the peroxisome membrane. Necessary for early peroxisomal biogenesis. Acts both as a cytosolic chaperone and as an import receptor for peroxisomal membrane proteins (PMPs). Binds and stabilizes newly synthesized PMPs in the cytoplasm by interacting with their hydrophobic membrane-spanning domains, and targets them to the peroxisome membrane by binding to the integral membrane protein PEX3. Excludes CDKN2A from the nucleus and prevents its interaction with MDM2, which results in active degradation of TP53. The polypeptide is Peroxisomal biogenesis factor 19 (PEX19) (Cricetulus griseus (Chinese hamster)).